We begin with the raw amino-acid sequence, 134 residues long: MENKKTIYFLCTGNSCRSQMAEAWGKKYLGNAWNVFSAGIEAHGVNPNAVRAMKEVGIDISDQTSDVIDSDILNKADLIVTLCSHADSVCPTTPTHVNRVHWGFDDPAGKEWPEFQRVRDEIGARIKKFAETGE.

Residues Cys-11, Cys-83, and Cys-90 each act as nucleophile in the active site. Intrachain disulfides connect Cys-11/Cys-83 and Cys-83/Cys-90.

It belongs to the low molecular weight phosphotyrosine protein phosphatase family. Thioredoxin-coupled ArsC subfamily.

It localises to the cytoplasm. The enzyme catalyses arsenate + [thioredoxin]-dithiol + H(+) = arsenite + [thioredoxin]-disulfide + H2O. In terms of biological role, catalyzes the reduction of arsenate [As(V)] to arsenite [As(III)]. This chain is Arsenate reductase, found in Brevibacillus brevis (strain 47 / JCM 6285 / NBRC 100599).